A 258-amino-acid polypeptide reads, in one-letter code: MPKTLTEKLNAIKAAGKGIFVPYIMAGDHEKGLDGLAETIHFLEDLGVSAIEVGIPFSDPVADGPVIEEAGLRSLAHGTSTQALVETLKTIETEIPLVIMTYFNPLFQYGVENFVKDLADTAVKGLIIPDLPHEHANFVEPFLANTDIALIPLVSLTTGIERQKELIEGAEGFIYAVAINGVTGKSGNYRADLDKHLAQLHQVADIPVLTGFGVSSQADLERFNAVSDGVIVGSKIVKALHQGEPIQDFIRQAVAYQK.

Catalysis depends on proton acceptor residues glutamate 52 and aspartate 63.

This sequence belongs to the TrpA family. In terms of assembly, tetramer of two alpha and two beta chains.

It catalyses the reaction (1S,2R)-1-C-(indol-3-yl)glycerol 3-phosphate + L-serine = D-glyceraldehyde 3-phosphate + L-tryptophan + H2O. The protein operates within amino-acid biosynthesis; L-tryptophan biosynthesis; L-tryptophan from chorismate: step 5/5. The alpha subunit is responsible for the aldol cleavage of indoleglycerol phosphate to indole and glyceraldehyde 3-phosphate. In Streptococcus pneumoniae serotype 4 (strain ATCC BAA-334 / TIGR4), this protein is Tryptophan synthase alpha chain.